We begin with the raw amino-acid sequence, 435 residues long: Tumor necrosis factor receptor superfamily member 3 (435 aa).

The first 30 residues, 1 to 30, serve as a signal peptide directing secretion; the sequence is MLLPWATSAPGLAWGPLVLGLFGLLAASQP. The Extracellular segment spans residues 31–227; it reads QAVPPYASEN…PPEMSGTMLM (197 aa). Asparagine 40 carries N-linked (GlcNAc...) asparagine glycosylation. TNFR-Cys repeat units follow at residues 42–81, 82–124, 125–168, and 169–211; these read TCRD…TVCA, TCAE…KTQC, RCQP…NHCV, and PCKA…TTCK. Disulfide bonds link cysteine 43-cysteine 58, cysteine 59-cysteine 72, cysteine 62-cysteine 80, cysteine 83-cysteine 98, cysteine 101-cysteine 116, cysteine 104-cysteine 124, cysteine 126-cysteine 132, cysteine 139-cysteine 148, cysteine 142-cysteine 167, and cysteine 170-cysteine 185. Residue asparagine 177 is glycosylated (N-linked (GlcNAc...) asparagine). Residues 228 to 248 form a helical membrane-spanning segment; the sequence is LAVLLPLAFFLLLATVFSCIW. The Cytoplasmic portion of the chain corresponds to 249 to 435; that stretch reads KSHPSLCRKL…GPRNQFITHD (187 aa). Serine 323 is subject to Phosphoserine. Positions 373–399 are enriched in pro residues; sequence PGPGDLPATPEPPYPIPEEGDPGPPGL. The tract at residues 373 to 435 is disordered; sequence PGPGDLPATP…GPRNQFITHD (63 aa). The segment covering 403–417 has biased composition (basic and acidic residues); it reads HQEDGKAWHLAETEH. Polar residues predominate over residues 421–435; that stretch reads TPSNRGPRNQFITHD.

In terms of assembly, self-associates; dimerization and trimerization are promoted by lymphotoxin (LTA(1)-LTB(2)). Associates with TRAF3. Associates with TRAF4. Associates with TRAF5. Interacts with Aedes aegypti lymphotoxin beta receptor inhibitor; the interaction reduces dimerization and trimerization of LTBR induced by lymphotoxin (LTA(1)-LTB(2)). (Microbial infection) Interacts with HCV core protein.

Its subcellular location is the membrane. Its function is as follows. Receptor for the heterotrimeric lymphotoxin containing LTA and LTB, and for TNFS14/LIGHT. Activates NF-kappa-B signaling pathway upon stimulation with lymphotoxin (LTA(1)-LTB(2)). Promotes apoptosis via TRAF3 and TRAF5. May play a role in the development of lymphoid organs. This Homo sapiens (Human) protein is Tumor necrosis factor receptor superfamily member 3 (LTBR).